Consider the following 144-residue polypeptide: Putative pre-16S rRNA nuclease (144 aa).

It belongs to the YqgF nuclease family.

It is found in the cytoplasm. Its function is as follows. Could be a nuclease involved in processing of the 5'-end of pre-16S rRNA. The sequence is that of Putative pre-16S rRNA nuclease from Acaryochloris marina (strain MBIC 11017).